Reading from the N-terminus, the 64-residue chain is Large ribosomal subunit protein bL35 (64 aa).

Belongs to the bacterial ribosomal protein bL35 family.

The sequence is that of Large ribosomal subunit protein bL35 from Acinetobacter baylyi (strain ATCC 33305 / BD413 / ADP1).